Consider the following 398-residue polypeptide: Isopenicillin N epimerase (398 aa).

Position 219 is an N6-(pyridoxal phosphate)lysine (K219). The segment at 243–264 (PQVSWGYRPDGENPSDERNRFG) is disordered. Residues 251–264 (PDGENPSDERNRFG) show a composition bias toward basic and acidic residues.

It belongs to the class-V pyridoxal-phosphate-dependent aminotransferase family. The cofactor is pyridoxal 5'-phosphate.

It catalyses the reaction isopenicillin N = penicillin N. It participates in antibiotic biosynthesis; cephalosporin C biosynthesis. Catalyzes the reversible isomerization between isopenicillin N and penicillin N. The chain is Isopenicillin N epimerase (cefD) from Amycolatopsis lactamdurans (Nocardia lactamdurans).